Reading from the N-terminus, the 209-residue chain is Orotate phosphoribosyltransferase (209 aa).

5-phospho-alpha-D-ribose 1-diphosphate is bound by residues Arg96, Lys100, His102, and 122–130; that span reads EDLISTGGS. Ser126 contacts orotate.

This sequence belongs to the purine/pyrimidine phosphoribosyltransferase family. PyrE subfamily. As to quaternary structure, homodimer. Requires Mg(2+) as cofactor.

The catalysed reaction is orotidine 5'-phosphate + diphosphate = orotate + 5-phospho-alpha-D-ribose 1-diphosphate. Its pathway is pyrimidine metabolism; UMP biosynthesis via de novo pathway; UMP from orotate: step 1/2. In terms of biological role, catalyzes the transfer of a ribosyl phosphate group from 5-phosphoribose 1-diphosphate to orotate, leading to the formation of orotidine monophosphate (OMP). This chain is Orotate phosphoribosyltransferase, found in Streptococcus pyogenes serotype M2 (strain MGAS10270).